A 536-amino-acid chain; its full sequence is Light-independent protochlorophyllide reductase subunit B (536 aa).

D36 contributes to the [4Fe-4S] cluster binding site. The active-site Proton donor is D274. Residue 409-410 participates in substrate binding; the sequence is GL. The interval 426 to 448 is disordered; sequence DEAGPSHHGGKAVPASAPRADEA.

It belongs to the ChlB/BchB/BchZ family. In terms of assembly, protochlorophyllide reductase is composed of three subunits; BchL, BchN and BchB. Forms a heterotetramer of two BchB and two BchN subunits. [4Fe-4S] cluster serves as cofactor.

The enzyme catalyses chlorophyllide a + oxidized 2[4Fe-4S]-[ferredoxin] + 2 ADP + 2 phosphate = protochlorophyllide a + reduced 2[4Fe-4S]-[ferredoxin] + 2 ATP + 2 H2O. It functions in the pathway porphyrin-containing compound metabolism; bacteriochlorophyll biosynthesis (light-independent). Its function is as follows. Component of the dark-operative protochlorophyllide reductase (DPOR) that uses Mg-ATP and reduced ferredoxin to reduce ring D of protochlorophyllide (Pchlide) to form chlorophyllide a (Chlide). This reaction is light-independent. The NB-protein (BchN-BchB) is the catalytic component of the complex. The polypeptide is Light-independent protochlorophyllide reductase subunit B (Cereibacter sphaeroides (strain KD131 / KCTC 12085) (Rhodobacter sphaeroides)).